The primary structure comprises 923 residues: Carnitine O-acetyltransferase YAT2 (923 aa).

The span at 1-11 shows a compositional bias: polar residues; that stretch reads MSSGSTIVSSD. Disordered regions lie at residues 1–21 and 197–232; these read MSSGSTIVSSDKSGRTFKHEE and NKPYTASDLEDPDYSSDEDDNDEPTQKDFDDRKRKH. N-acetylserine is present on Ser2. The segment covering 12 to 21 has biased composition (basic and acidic residues); sequence KSGRTFKHEE. Over residues 204 to 219 the composition is skewed to acidic residues; sequence DLEDPDYSSDEDDNDE. A compositionally biased stretch (basic and acidic residues) spans 220–232; that stretch reads PTQKDFDDRKRKH. CoA-binding positions include 529–541 and Ser567; that span reads GRRSAQRLGVKPD. Residue Ser576 participates in (R)-carnitine binding. The interval 763–787 is disordered; the sequence is NAVNNPPKRNGHTVNGSRKTSSSSQ. Residues 774–787 are compositionally biased toward polar residues; the sequence is HTVNGSRKTSSSSQ. Position 783 is a phosphoserine (Ser783).

Belongs to the carnitine/choline acetyltransferase family.

Its subcellular location is the cytoplasm. It carries out the reaction (R)-carnitine + acetyl-CoA = O-acetyl-(R)-carnitine + CoA. Its function is as follows. Carnitine O-acetyltransferase involved in the shutteling of acetyl-CoA in the cell. The protein is Carnitine O-acetyltransferase YAT2 of Saccharomyces cerevisiae (strain ATCC 204508 / S288c) (Baker's yeast).